A 786-amino-acid chain; its full sequence is Exo-beta-D-glucosaminidase (786 aa).

Residues tyrosine 53, 102-103, 178-179, glutamate 306, glutamate 347, and tyrosine 379 contribute to the substrate site; these read GE and DE. Glutamate 179 functions as the Proton donor in the catalytic mechanism. Glutamate 347 acts as the Nucleophile in catalysis.

The protein belongs to the glycosyl hydrolase 35 family. As to quaternary structure, homodimer.

The protein resides in the cytoplasm. The catalysed reaction is beta-D-glucosaminyl-(1-&gt;4)-N-acetyl-D-glucosamine + H2O = D-glucosamine + N-acetyl-D-glucosamine. The protein operates within glycan degradation; chitin degradation. Exo-type enzyme that specifically cleaves the non-reducing terminal glycosidic bond of chitooligosaccharides. Catalyzes the hydrolysis of GlcN-GlcNAc to glucosamine (GlcN) and N-acetylglucosamine (GlcNAc). Involved in chitin degradation. Can also hydrolyze reduced chitobiose (GlcN2OH) and chitooligosaccharides of various chain lengths. The protein is Exo-beta-D-glucosaminidase of Thermococcus kodakarensis (strain ATCC BAA-918 / JCM 12380 / KOD1) (Pyrococcus kodakaraensis (strain KOD1)).